The primary structure comprises 417 residues: Type II methyltransferase M.Eco47II (417 aa).

An SAM-dependent MTase C5-type domain is found at 81–414 (YTVLELFAGA…KSVVHLLDKI (334 aa)). Cys-153 is a catalytic residue.

This sequence belongs to the class I-like SAM-binding methyltransferase superfamily. C5-methyltransferase family.

It carries out the reaction a 2'-deoxycytidine in DNA + S-adenosyl-L-methionine = a 5-methyl-2'-deoxycytidine in DNA + S-adenosyl-L-homocysteine + H(+). Functionally, a methylase that recognizes the double-stranded sequence 5'-GGNCC-3', methylates C-? on both strands, and protects the DNA from cleavage by both the Eco47I and Eco47II endonucleases. This Escherichia coli protein is Type II methyltransferase M.Eco47II.